Here is a 151-residue protein sequence, read N- to C-terminus: Aspartate carbamoyltransferase regulatory chain (151 aa).

Zn(2+) is bound by residues cysteine 108, cysteine 113, cysteine 136, and cysteine 139.

The protein belongs to the PyrI family. In terms of assembly, contains catalytic and regulatory chains. It depends on Zn(2+) as a cofactor.

Its function is as follows. Involved in allosteric regulation of aspartate carbamoyltransferase. In Porphyromonas gingivalis (strain ATCC 33277 / DSM 20709 / CIP 103683 / JCM 12257 / NCTC 11834 / 2561), this protein is Aspartate carbamoyltransferase regulatory chain.